We begin with the raw amino-acid sequence, 110 residues long: Large ribosomal subunit protein uL22 (110 aa).

It belongs to the universal ribosomal protein uL22 family. In terms of assembly, part of the 50S ribosomal subunit.

Functionally, this protein binds specifically to 23S rRNA; its binding is stimulated by other ribosomal proteins, e.g. L4, L17, and L20. It is important during the early stages of 50S assembly. It makes multiple contacts with different domains of the 23S rRNA in the assembled 50S subunit and ribosome. Its function is as follows. The globular domain of the protein is located near the polypeptide exit tunnel on the outside of the subunit, while an extended beta-hairpin is found that lines the wall of the exit tunnel in the center of the 70S ribosome. In Pectobacterium atrosepticum (strain SCRI 1043 / ATCC BAA-672) (Erwinia carotovora subsp. atroseptica), this protein is Large ribosomal subunit protein uL22.